We begin with the raw amino-acid sequence, 111 residues long: MAMPNFGDMMKQLQEAGAKMQDVQKQLEKLVSEGEAGGGMVKAKVNGRQKLLELSIDPEIMDDVDMVQDLVVAAVNKALDASAQLAQNEIQKAAGGMINPADLLKQFGGQG.

The protein belongs to the YbaB/EbfC family. In terms of assembly, homodimer.

It is found in the cytoplasm. The protein localises to the nucleoid. Its function is as follows. Binds to DNA and alters its conformation. May be involved in regulation of gene expression, nucleoid organization and DNA protection. The chain is Nucleoid-associated protein Cpar_0834 from Chlorobaculum parvum (strain DSM 263 / NCIMB 8327) (Chlorobium vibrioforme subsp. thiosulfatophilum).